Consider the following 717-residue polypeptide: Transport/processing ATP-binding protein ComA (717 aa).

The region spanning 11 to 138 is the Peptidase C39 domain; it reads QVDQMDCGVA…EEWTGVTLFM (128 aa). The active site involves Cys17. 7 helical membrane-spanning segments follow: residues 18 to 38, 166 to 186, 205 to 225, 237 to 257, 281 to 301, 306 to 326, and 397 to 417; these read GVASLAMVFGYYGSYYFLAHL, GLIANIVLATLLVTVINIVGS, LGIISIGLVIVYILQQILSYA, LSIDVILSYIKHVFHLPMSFF, STILSIFLDVSTVVIISLVLF, NLFFMTLLALPIYTVIIFAFM, and VAHLLLNVGILWMGAVLVMDG. In terms of domain architecture, ABC transmembrane type-1 spans 168–450; sequence IANIVLATLL…IINLQTKLQT (283 aa). Positions 484–717 constitute an ABC transporter domain; that stretch reads MTFKQVHYKY…GGFYAHLVNS (234 aa). 517–524 provides a ligand contact to ATP; it reads GISGSGKT.

The protein belongs to the ABC transporter superfamily. HlyB family.

The protein localises to the cell membrane. Required for induction of competence. Seems to transport the competence-stimulating peptide (CSP). This is Transport/processing ATP-binding protein ComA (comA) from Streptococcus pneumoniae (strain ATCC BAA-255 / R6).